Here is a 614-residue protein sequence, read N- to C-terminus: Probable zinc transporter protein DDB_G0269332 (614 aa).

2 disordered regions span residues 1–103 (MSDI…LPHL) and 115–178 (SSYN…NNEF). Over 1–203 (MSDINSNSYD…NLNRDSDAKK (203 aa)) the chain is Cytoplasmic. Residues 17-64 (QHQQESQYHPQQQQQQQQQQQQQQEYYNQQHQQESQYQQQSPPQQQYD) are compositionally biased toward low complexity. A compositionally biased stretch (basic residues) spans 80-92 (GHGRSHNSGHGHS). Low complexity predominate over residues 121 to 176 (NNSGDISNSNNNNNNNNQYNYNNNNNNNNYNNNINNNQFNSSVYNNNNNNNNNNNN). The chain crosses the membrane as a helical span at residues 204 to 224 (LAAWISVMLVFTIYEIFYGAY). Topologically, residues 225–233 (LESLGLVSD) are extracellular. The chain crosses the membrane as a helical span at residues 234-254 (GFHALFDCIGMGIALLAMLVG). Topologically, residues 255 to 270 (KRGISNQEYTYGYDRW) are cytoplasmic. Residues 271–291 (EVLGTFSNGCFLLFVSFFLFL) form a helical membrane-spanning segment. Residues 292–306 (ESIERLLEPPHIHNH) are Extracellular-facing. A helical transmembrane segment spans residues 307–327 (GRVMSLATISLIINIVGVLFF). The Cytoplasmic segment spans residues 328–351 (KQKSNERKQQSSIRSENLLTISHH). The chain crosses the membrane as a helical span at residues 352–372 (ILVDSCTSLGVILSSLVGQAF). Over 373-377 (GLEIS) the chain is Extracellular. Residues 378–398 (DSLISIIIACIIVYNALPICI) traverse the membrane as a helical segment. At 399–614 (KTSAILLQTT…NSSHSHAHNH (216 aa)) the chain is on the cytoplasmic side. The interval 483-614 (EGKHNSHSHG…NSSHSHAHNH (132 aa)) is disordered. 2 stretches are compositionally biased toward basic residues: residues 487 to 499 (NSHSHGGAHHHPH) and 507 to 523 (SHNHSHGHNHGHSHGHS). A compositionally biased stretch (basic and acidic residues) spans 525–535 (GGNDDHEHGEN). The span at 548-567 (VQPTSPFSSHYTDIHSNNTP) shows a compositional bias: polar residues. The segment covering 575 to 585 (QDDEDDEDDYD) has biased composition (acidic residues). Residues 586-599 (HDEHHHDHDHDEHH) are compositionally biased toward basic and acidic residues. Positions 600–614 (HGHSHNSSHSHAHNH) are enriched in basic residues.

It belongs to the cation diffusion facilitator (CDF) transporter (TC 2.A.4) family. SLC30A subfamily.

Its subcellular location is the membrane. Its function is as follows. May be involved in zinc transport from the cytoplasm to either intracellular organelles or extracellular spaces. The chain is Probable zinc transporter protein DDB_G0269332 from Dictyostelium discoideum (Social amoeba).